Reading from the N-terminus, the 73-residue chain is Protein SlyX homolog (73 aa).

This sequence belongs to the SlyX family.

In Pasteurella multocida (strain Pm70), this protein is Protein SlyX homolog.